We begin with the raw amino-acid sequence, 158 residues long: NAD(P)H-quinone oxidoreductase subunit J, chloroplastic (158 aa).

This sequence belongs to the complex I 30 kDa subunit family. In terms of assembly, NDH is composed of at least 16 different subunits, 5 of which are encoded in the nucleus.

Its subcellular location is the plastid. The protein resides in the chloroplast thylakoid membrane. The catalysed reaction is a plastoquinone + NADH + (n+1) H(+)(in) = a plastoquinol + NAD(+) + n H(+)(out). The enzyme catalyses a plastoquinone + NADPH + (n+1) H(+)(in) = a plastoquinol + NADP(+) + n H(+)(out). In terms of biological role, NDH shuttles electrons from NAD(P)H:plastoquinone, via FMN and iron-sulfur (Fe-S) centers, to quinones in the photosynthetic chain and possibly in a chloroplast respiratory chain. The immediate electron acceptor for the enzyme in this species is believed to be plastoquinone. Couples the redox reaction to proton translocation, and thus conserves the redox energy in a proton gradient. In Capsella bursa-pastoris (Shepherd's purse), this protein is NAD(P)H-quinone oxidoreductase subunit J, chloroplastic.